Consider the following 170-residue polypeptide: Macro domain-containing protein DR_2288 (170 aa).

The region spanning 1–170 is the Macro domain; the sequence is MPLELVQGDI…HVFERALAQL (170 aa).

It belongs to the MacroD-type family.

This Deinococcus radiodurans (strain ATCC 13939 / DSM 20539 / JCM 16871 / CCUG 27074 / LMG 4051 / NBRC 15346 / NCIMB 9279 / VKM B-1422 / R1) protein is Macro domain-containing protein DR_2288.